The sequence spans 87 residues: Small ribosomal subunit protein bS20 (87 aa).

Positions 1–15 are enriched in basic residues; it reads MANHKSAMKRIKQTA. Residues 1-27 form a disordered region; that stretch reads MANHKSAMKRIKQTAKRTERNKHERST. A compositionally biased stretch (basic and acidic residues) spans 16 to 27; it reads KRTERNKHERST.

The protein belongs to the bacterial ribosomal protein bS20 family.

Functionally, binds directly to 16S ribosomal RNA. The protein is Small ribosomal subunit protein bS20 of Citrifermentans bemidjiense (strain ATCC BAA-1014 / DSM 16622 / JCM 12645 / Bem) (Geobacter bemidjiensis).